The chain runs to 652 residues: Aorsin (652 aa).

An N-terminal signal peptide occupies residues 1 to 22; sequence MRPLSHLSFFNGLLLGLSALSA. Residues 23–215 constitute a propeptide, removed in mature form; it reads ATSVVHERRE…PRPIQQHDVK (193 aa). N-linked (GlcNAc...) asparagine glycosylation occurs at Asn-112. Residues 177-211 form a disordered region; sequence VNLNPSSGKPSSIRRRAAASKKTKLPARGPRPIQQ. A compositionally biased stretch (basic residues) spans 188–201; the sequence is SIRRRAAASKKTKL. Asn-218 and Asn-247 each carry an N-linked (GlcNAc...) asparagine glycan. Residues 225–651 enclose the Peptidase S53 domain; sequence LITPECIRAL…PKMLKLWLDL (427 aa). Residues Glu-301 and Asp-305 each act as charge relay system in the active site. N-linked (GlcNAc...) asparagine glycosylation is found at Asn-331 and Asn-445. Catalysis depends on Ser-569, which acts as the Charge relay system. Residues Asp-610 and Ile-611 each contribute to the Ca(2+) site. The N-linked (GlcNAc...) asparagine glycan is linked to Asn-613. The Ca(2+) site is built by Gly-629 and Asp-631.

Requires Ca(2+) as cofactor. N-glycosylated. In terms of processing, O-glycosylated.

It is found in the secreted. The protein localises to the extracellular space. Inhibited by antipain and leupeptin. In terms of biological role, serine endopeptidase which hydrolyzes a range of fluorogenic peptide substrates containing the basic residues arginine or lysine at the P1 position and prefers paired basic resides. Also hydrolyzes clupeine and salmine, activates plasminogen and converts trypsinogen to trypsin. This Aspergillus oryzae (strain ATCC 42149 / RIB 40) (Yellow koji mold) protein is Aorsin.